A 131-amino-acid polypeptide reads, in one-letter code: Profilin-9 (131 aa).

C13 and C115 form a disulfide bridge. Positions 81–97 (AVTRGKKGAGGITIKKT) match the Involved in PIP2 interaction motif. The residue at position 111 (T111) is a Phosphothreonine.

It belongs to the profilin family. Occurs in many kinds of cells as a complex with monomeric actin in a 1:1 ratio. Post-translationally, phosphorylated by MAP kinases.

The protein resides in the cytoplasm. The protein localises to the cytoskeleton. In terms of biological role, binds to actin and affects the structure of the cytoskeleton. At high concentrations, profilin prevents the polymerization of actin, whereas it enhances it at low concentrations. The polypeptide is Profilin-9 (Phleum pratense (Common timothy)).